A 329-amino-acid chain; its full sequence is Peroxidase 73 (329 aa).

An N-terminal signal peptide occupies residues 1–25 (MARFSLVVVVTLSLAISMFPDTTTA). 4 disulfide bridges follow: Cys36–Cys119, Cys69–Cys74, Cys125–Cys325, and Cys204–Cys236. The active-site Proton acceptor is His67. Ca(2+) contacts are provided by Asp68, Val71, Gly73, Asp75, and Ser77. Position 167 (Pro167) interacts with substrate. His197 contacts heme b. Residue Thr198 coordinates Ca(2+). N-linked (GlcNAc...) asparagine glycosylation is present at Asn215. Residues Asp249, Thr252, and Asp257 each coordinate Ca(2+).

The protein belongs to the peroxidase family. Classical plant (class III) peroxidase subfamily. The cofactor is heme b. Ca(2+) serves as cofactor. Expressed in the whole plant, with the highest expression in roots.

The protein localises to the secreted. It catalyses the reaction 2 a phenolic donor + H2O2 = 2 a phenolic radical donor + 2 H2O. In terms of biological role, removal of H(2)O(2), oxidation of toxic reductants, biosynthesis and degradation of lignin, suberization, auxin catabolism, response to environmental stresses such as wounding, pathogen attack and oxidative stress. These functions might be dependent on each isozyme/isoform in each plant tissue. The sequence is that of Peroxidase 73 (PER73) from Arabidopsis thaliana (Mouse-ear cress).